The sequence spans 592 residues: Arginine--tRNA ligase (592 aa).

The 'HIGH' region motif lies at 131–141 (ANPTGPMHVGH).

Belongs to the class-I aminoacyl-tRNA synthetase family. Monomer.

It localises to the cytoplasm. It carries out the reaction tRNA(Arg) + L-arginine + ATP = L-arginyl-tRNA(Arg) + AMP + diphosphate. In Rhodospirillum rubrum (strain ATCC 11170 / ATH 1.1.1 / DSM 467 / LMG 4362 / NCIMB 8255 / S1), this protein is Arginine--tRNA ligase.